Consider the following 348-residue polypeptide: dTDP-glucose 4,6-dehydratase (348 aa).

NAD(+)-binding positions include 15 to 16, 37 to 40, 62 to 63, and 82 to 86; these read FI, DKLT, DI, and YAAES. Substrate is bound by residues serine 86 and asparagine 88. Residue threonine 101 coordinates NAD(+). Residue threonine 125 participates in substrate binding. Aspartate 126 functions as the Proton donor in the catalytic mechanism. Residues glutamate 127 and tyrosine 161 each act as proton acceptor in the active site. NAD(+) is bound at residue 161-165; it reads YSSTK. Asparagine 190 is a substrate binding site. An NAD(+)-binding site is contributed by asparagine 191. Substrate contacts are provided by residues 200-205, 216-218, arginine 225, asparagine 260, and 283-287; these read KFIPRQ, KLY, and DRAGH.

It belongs to the NAD(P)-dependent epimerase/dehydratase family. dTDP-glucose dehydratase subfamily. As to quaternary structure, homodimer. NAD(+) serves as cofactor.

It carries out the reaction dTDP-alpha-D-glucose = dTDP-4-dehydro-6-deoxy-alpha-D-glucose + H2O. It functions in the pathway carbohydrate biosynthesis; dTDP-L-rhamnose biosynthesis. In terms of biological role, catalyzes the dehydration of dTDP-D-glucose to form dTDP-6-deoxy-D-xylo-4-hexulose via a three-step process involving oxidation, dehydration and reduction. The sequence is that of dTDP-glucose 4,6-dehydratase (rmlB) from Streptococcus mutans serotype c (strain ATCC 700610 / UA159).